Here is a 550-residue protein sequence, read N- to C-terminus: Arginine--tRNA ligase (550 aa).

The short motif at Ala-130 to Gly-140 is the 'HIGH' region element.

This sequence belongs to the class-I aminoacyl-tRNA synthetase family. Monomer.

It localises to the cytoplasm. It catalyses the reaction tRNA(Arg) + L-arginine + ATP = L-arginyl-tRNA(Arg) + AMP + diphosphate. The sequence is that of Arginine--tRNA ligase from Corynebacterium glutamicum (strain R).